Here is a 31-residue protein sequence, read N- to C-terminus: Cytochrome b6-f complex subunit 6 (31 aa).

The helical transmembrane segment at 4-24 (LLSYFGLLLAALISTLVLFIG) threads the bilayer.

It belongs to the PetL family. In terms of assembly, the 4 large subunits of the cytochrome b6-f complex are cytochrome b6, subunit IV (17 kDa polypeptide, PetD), cytochrome f and the Rieske protein, while the 4 small subunits are PetG, PetL, PetM and PetN. The complex functions as a dimer.

It localises to the plastid. The protein localises to the chloroplast thylakoid membrane. In terms of biological role, component of the cytochrome b6-f complex, which mediates electron transfer between photosystem II (PSII) and photosystem I (PSI), cyclic electron flow around PSI, and state transitions. PetL is important for photoautotrophic growth as well as for electron transfer efficiency and stability of the cytochrome b6-f complex. The polypeptide is Cytochrome b6-f complex subunit 6 (Psilotum nudum (Whisk fern)).